A 586-amino-acid chain; its full sequence is Probable zinc metalloprotease EGY3, chloroplastic (586 aa).

Residues 1–54 constitute a chloroplast transit peptide; sequence MASSSLVTSLLFSSSSSSNTATSTSSRRSFSLFSKNQYCKPRPLRRSSSRLLVR. Disordered stretches follow at residues 13–32 and 58–122; these read SSSS…SFSL and QQQQ…DWRS. A compositionally biased stretch (basic and acidic residues) spans 61 to 73; sequence QEEKAAPAAESHH. Positions 103-195 form a coiled coil; it reads VKKSKEELEE…NTFKALDLNK (93 aa). A run of 7 helical transmembrane segments spans residues 287-307, 318-338, 389-409, 427-447, 454-474, 506-526, and 550-570; these read LSAV…SGFF, VSDV…SEIA, ASAY…DGSL, PLLS…GNVL, VGVP…VTSL, VALG…WGLF, and YAWG…NGGG.

This sequence belongs to the peptidase M50B family.

Its subcellular location is the plastid. It localises to the chloroplast membrane. Probable membrane-associated metalloprotease that may be involved in chloroplast development. In Oryza sativa subsp. japonica (Rice), this protein is Probable zinc metalloprotease EGY3, chloroplastic (EGY3).